We begin with the raw amino-acid sequence, 519 residues long: DDB1- and CUL4-associated factor 17 (519 aa).

2 helical membrane passes run 186-206 (VLLY…ILEI) and 222-242 (GILI…QAII).

As to quaternary structure, interacts with DDB1, CUL4A and CUL4B. As to expression, ubiquitously expressed in the embryo, with higher expression in brain, liver and skin tissues.

It localises to the membrane. It is found in the nucleus. The protein localises to the nucleolus. Its pathway is protein modification; protein ubiquitination. Its function is as follows. May function as a substrate receptor for CUL4-DDB1 E3 ubiquitin-protein ligase complex. The chain is DDB1- and CUL4-associated factor 17 (Dcaf17) from Mus musculus (Mouse).